Here is a 236-residue protein sequence, read N- to C-terminus: uncharacterized protein (236 aa).

The tract at residues 186 to 236 is disordered; that stretch reads HGRGDTRNLNDITGLGHERERDRENTHYEKKPKLDSDSEVDIRSFRQDMDL. Residues 201-236 are compositionally biased toward basic and acidic residues; it reads GHERERDRENTHYEKKPKLDSDSEVDIRSFRQDMDL. Residue Ser221 is modified to Phosphoserine.

This is an uncharacterized protein from Saccharomyces cerevisiae (strain ATCC 204508 / S288c) (Baker's yeast).